We begin with the raw amino-acid sequence, 382 residues long: Protein RecA (382 aa).

An ATP-binding site is contributed by 79 to 86; that stretch reads GPESSGKT. A disordered region spans residues 362–382; the sequence is ATKSAAKGSEVQADVKTKGAA.

This sequence belongs to the RecA family.

It localises to the cytoplasm. Can catalyze the hydrolysis of ATP in the presence of single-stranded DNA, the ATP-dependent uptake of single-stranded DNA by duplex DNA, and the ATP-dependent hybridization of homologous single-stranded DNAs. It interacts with LexA causing its activation and leading to its autocatalytic cleavage. The polypeptide is Protein RecA (Synechococcus sp. (strain WH7803)).